A 318-amino-acid polypeptide reads, in one-letter code: Aspartate carbamoyltransferase catalytic subunit (318 aa).

Residues Arg-55 and Thr-56 each coordinate carbamoyl phosphate. Residue Lys-83 coordinates L-aspartate. Carbamoyl phosphate-binding residues include Arg-105, His-138, and Gln-141. Residues Arg-171 and Arg-225 each coordinate L-aspartate. 2 residues coordinate carbamoyl phosphate: Gly-266 and Pro-267.

This sequence belongs to the aspartate/ornithine carbamoyltransferase superfamily. ATCase family. As to quaternary structure, heterododecamer (2C3:3R2) of six catalytic PyrB chains organized as two trimers (C3), and six regulatory PyrI chains organized as three dimers (R2).

It carries out the reaction carbamoyl phosphate + L-aspartate = N-carbamoyl-L-aspartate + phosphate + H(+). It participates in pyrimidine metabolism; UMP biosynthesis via de novo pathway; (S)-dihydroorotate from bicarbonate: step 2/3. Its function is as follows. Catalyzes the condensation of carbamoyl phosphate and aspartate to form carbamoyl aspartate and inorganic phosphate, the committed step in the de novo pyrimidine nucleotide biosynthesis pathway. The chain is Aspartate carbamoyltransferase catalytic subunit from Corynebacterium kroppenstedtii (strain DSM 44385 / JCM 11950 / CIP 105744 / CCUG 35717).